A 365-amino-acid polypeptide reads, in one-letter code: Ferredoxin--NADP reductase, chloroplastic (365 aa).

The segment at 1–22 (MAAAVTAAVSFPSTKSTPLSTR) is disordered. Residues 11–22 (FPSTKSTPLSTR) are compositionally biased toward polar residues. Residues 86-208 (KNPYTGRCLL…TGPVGKEMLM (123 aa)) enclose the FAD-binding FR-type domain. Residues 144–147 (RLYS), 165–167 (CVK), tyrosine 171, 182–184 (VCS), and threonine 223 each bind FAD. Positions 147 and 167 each coordinate NADP(+). NADP(+) contacts are provided by residues threonine 223, 255–256 (VP), 285–286 (SR), lysine 295, 324–325 (GL), and glutamate 363.

Belongs to the ferredoxin--NADP reductase type 1 family. FAD is required as a cofactor.

It localises to the plastid. It is found in the chloroplast stroma. The protein resides in the chloroplast thylakoid membrane. It catalyses the reaction 2 reduced [2Fe-2S]-[ferredoxin] + NADP(+) + H(+) = 2 oxidized [2Fe-2S]-[ferredoxin] + NADPH. It functions in the pathway energy metabolism; photosynthesis. In terms of biological role, may play a key role in regulating the relative amounts of cyclic and non-cyclic electron flow to meet the demands of the plant for ATP and reducing power. This Mesembryanthemum crystallinum (Common ice plant) protein is Ferredoxin--NADP reductase, chloroplastic (PETH).